The sequence spans 100 residues: Large ribosomal subunit protein uL23 (100 aa).

Belongs to the universal ribosomal protein uL23 family. As to quaternary structure, part of the 50S ribosomal subunit. Contacts protein L29, and trigger factor when it is bound to the ribosome.

Its function is as follows. One of the early assembly proteins it binds 23S rRNA. One of the proteins that surrounds the polypeptide exit tunnel on the outside of the ribosome. Forms the main docking site for trigger factor binding to the ribosome. This Edwardsiella ictaluri (strain 93-146) protein is Large ribosomal subunit protein uL23.